Here is a 148-residue protein sequence, read N- to C-terminus: Proline-rich protein 13 (148 aa).

The interval 1–148 (MWNPNAGQPG…SSSSSSSDSD (148 aa)) is disordered. Composition is skewed to pro residues over residues 27 to 67 (AHPP…PQPG) and 75 to 93 (GPYP…PVNP). Positions 109 to 135 (MQKKMKKAHKKMHKHQKHHKYHKHGKH) are enriched in basic residues. A compositionally biased stretch (low complexity) spans 136–148 (SSSSSSSSSSDSD).

Its subcellular location is the nucleus. In terms of biological role, negatively regulates TSP1 expression at the level of transcription. This down-regulation was shown to reduce taxane-induced apoptosis. This chain is Proline-rich protein 13 (PRR13), found in Homo sapiens (Human).